A 247-amino-acid polypeptide reads, in one-letter code: Adenosylcobinamide-GDP ribazoletransferase (247 aa).

6 helical membrane passes run 31–51, 57–77, 109–129, 136–156, 189–209, and 218–238; these read VVWF…AAAL, PWLG…GLHL, FGVI…HWLL, PALV…TLLL, ITPI…WMWL, and ILGA…GVSL.

Belongs to the CobS family. Mg(2+) serves as cofactor.

Its subcellular location is the cell inner membrane. It carries out the reaction alpha-ribazole + adenosylcob(III)inamide-GDP = adenosylcob(III)alamin + GMP + H(+). The catalysed reaction is alpha-ribazole 5'-phosphate + adenosylcob(III)inamide-GDP = adenosylcob(III)alamin 5'-phosphate + GMP + H(+). Its pathway is cofactor biosynthesis; adenosylcobalamin biosynthesis; adenosylcobalamin from cob(II)yrinate a,c-diamide: step 7/7. In terms of biological role, joins adenosylcobinamide-GDP and alpha-ribazole to generate adenosylcobalamin (Ado-cobalamin). Also synthesizes adenosylcobalamin 5'-phosphate from adenosylcobinamide-GDP and alpha-ribazole 5'-phosphate. This chain is Adenosylcobinamide-GDP ribazoletransferase, found in Thiobacillus denitrificans (strain ATCC 25259 / T1).